The chain runs to 306 residues: Curved DNA-binding protein (306 aa).

Residues 5 to 69 (DYYAIMGVKP…QRRAEYDQLW (65 aa)) form the J domain.

The protein localises to the cytoplasm. The protein resides in the nucleoid. Functionally, DNA-binding protein that preferentially recognizes a curved DNA sequence. It is probably a functional analog of DnaJ; displays overlapping activities with DnaJ, but functions under different conditions, probably acting as a molecular chaperone in an adaptive response to environmental stresses other than heat shock. Lacks autonomous chaperone activity; binds native substrates and targets them for recognition by DnaK. Its activity is inhibited by the binding of CbpM. In Citrobacter koseri (strain ATCC BAA-895 / CDC 4225-83 / SGSC4696), this protein is Curved DNA-binding protein.